The chain runs to 154 residues: MDQKIQSLPAKKNIALVAHDGKKAALKLWCIKHLNALSEHTLYATGTTGHLINKTTGLDVIQLLSGPMGGDQQLGAKIAEHEIHMLVFFWDPLASQPHDPDVKALLRLAAVWNIPVACNEVSADMLLSSPLMNVELERTLPDYEKYLATRQIDI.

The region spanning 6 to 154 (QSLPAKKNIA…KYLATRQIDI (149 aa)) is the MGS-like domain. Substrate is bound by residues H19, K23, 45-48 (TGTT), and 65-66 (SG). The active-site Proton donor/acceptor is the D71. H98 lines the substrate pocket.

The protein belongs to the methylglyoxal synthase family.

It carries out the reaction dihydroxyacetone phosphate = methylglyoxal + phosphate. Its function is as follows. Catalyzes the formation of methylglyoxal from dihydroxyacetone phosphate. The chain is Methylglyoxal synthase from Pseudoalteromonas translucida (strain TAC 125).